Reading from the N-terminus, the 153-residue chain is Prostaglandin E synthase (153 aa).

The Lumenal portion of the chain corresponds to 1–13 (MPPSGLELMNGQV). Residues 14-42 (LPAFLLCSALLVIKMYVVAVITGQVRLRK) traverse the membrane as a helical segment. Arg-39 lines the glutathione pocket. Residues 43–61 (KAFANPEDAQRHGGLQYCR) lie on the Cytoplasmic side of the membrane. Residues 62–91 (NDPDVERCLRAHRNDMETIYPFLFLGFVYS) traverse the membrane as a helical segment. 74-78 (RNDME) lines the glutathione pocket. The Lumenal segment spans residues 92–96 (FLGPN). Residues 97–120 (PFVARMHFLVFFLGRMVHTVAYLG) traverse the membrane as a helical segment. The glutathione site is built by His-114 and Tyr-118. The Cytoplasmic segment spans residues 121-124 (KLRA). Residues 125–153 (PTRSLAYTLAQLPCASMALQIVWEAARHL) traverse the membrane as a helical segment. Glutathione is bound at residue 127–131 (RSLAY).

This sequence belongs to the MAPEG family. As to quaternary structure, homotrimer. It depends on glutathione as a cofactor.

The protein localises to the membrane. Its subcellular location is the cytoplasm. It localises to the perinuclear region. The enzyme catalyses prostaglandin H2 = prostaglandin E2. It catalyses the reaction 2-glyceryl-prostaglandin H2 = 2-glyceryl-prostaglandin E2. It carries out the reaction prostaglandin G2 = (15S)-15-hydroperoxy-prostaglandin E2. The catalysed reaction is 1-chloro-2,4-dinitrobenzene + glutathione = 2,4-dinitrophenyl-S-glutathione + chloride + H(+). The enzyme catalyses (5S)-hydroperoxy-(6E,8Z,11Z,14Z)-eicosatetraenoate + 2 glutathione = (5S)-hydroxy-(6E,8Z,11Z,14Z)-eicosatetraenoate + glutathione disulfide + H2O. It functions in the pathway lipid metabolism; prostaglandin biosynthesis. In terms of biological role, terminal enzyme of the cyclooxygenase (COX)-2-mediated prostaglandin E2 (PGE2) biosynthetic pathway. Catalyzes the glutathione-dependent oxidoreduction of prostaglandin endoperoxide H2 (PGH2) to prostaglandin E2 (PGE2) in response to inflammatory stimuli. Plays a key role in inflammation response, fever and pain. Also catalyzes the oxidoreduction of endocannabinoids into prostaglandin glycerol esters and PGG2 into 15-hydroperoxy-PGE2. In addition, displays low glutathione transferase and glutathione-dependent peroxidase activities, toward 1-chloro-2,4-dinitrobenzene and 5-hydroperoxyicosatetraenoic acid (5-HPETE), respectively. This is Prostaglandin E synthase (PTGES) from Bos taurus (Bovine).